Reading from the N-terminus, the 169-residue chain is Disulfide bond formation protein B (169 aa).

At 1–14 (MNNLTLSLHRERRL) the chain is on the cytoplasmic side. Residues 15 to 31 (LVLLGLVCLALLAGALY) form a helical membrane-spanning segment. Residues 32-49 (LQYVKNEDPCPLCIIQRY) lie on the Periplasmic side of the membrane. Cys41 and Cys44 are oxidised to a cystine. The helical transmembrane segment at 50 to 64 (FFVLIAVFAFIGAGM) threads the bilayer. The Cytoplasmic portion of the chain corresponds to 65–71 (ASGAGIA). Residues 72-89 (VIEALIVLSAAAGVGTAA) traverse the membrane as a helical segment. The Periplasmic segment spans residues 90 to 144 (RHLYVQLNPGFSCGFDALQPVVDSLPPAHWLPGVFKVAGLCETVYPPIFGILLPG). Cysteines 102 and 130 form a disulfide. Residues 145–163 (WALIAFALIVVPVAASLLR) traverse the membrane as a helical segment. The Cytoplasmic portion of the chain corresponds to 164-169 (HRGRLR).

Belongs to the DsbB family.

It localises to the cell inner membrane. Required for disulfide bond formation in some periplasmic proteins. Acts by oxidizing the DsbA protein. The protein is Disulfide bond formation protein B of Burkholderia thailandensis (strain ATCC 700388 / DSM 13276 / CCUG 48851 / CIP 106301 / E264).